The following is a 365-amino-acid chain: Sulfate/thiosulfate import ATP-binding protein CysA (365 aa).

The region spanning 3 to 237 (IEIARIKKSF…PATRFVLEFM (235 aa)) is the ABC transporter domain. 35-42 (GPSGSGKT) is an ATP binding site.

It belongs to the ABC transporter superfamily. Sulfate/tungstate importer (TC 3.A.1.6) family. In terms of assembly, the complex is composed of two ATP-binding proteins (CysA), two transmembrane proteins (CysT and CysW) and a solute-binding protein (CysP).

The protein resides in the cell inner membrane. It catalyses the reaction sulfate(out) + ATP + H2O = sulfate(in) + ADP + phosphate + H(+). The catalysed reaction is thiosulfate(out) + ATP + H2O = thiosulfate(in) + ADP + phosphate + H(+). Functionally, part of the ABC transporter complex CysAWTP involved in sulfate/thiosulfate import. Responsible for energy coupling to the transport system. This is Sulfate/thiosulfate import ATP-binding protein CysA from Salmonella typhimurium (strain LT2 / SGSC1412 / ATCC 700720).